Reading from the N-terminus, the 37-residue chain is Cytochrome b6-f complex subunit 5 (37 aa).

The helical transmembrane segment at 5 to 25 (LLSGIVPGLIPITLAGSFVIA) threads the bilayer.

Belongs to the PetG family. As to quaternary structure, the 4 large subunits of the cytochrome b6-f complex are cytochrome b6, subunit IV (17 kDa polypeptide, PetD), cytochrome f and the Rieske protein, while the 4 small subunits are PetG, PetL, PetM and PetN. The complex functions as a dimer.

The protein localises to the plastid membrane. In terms of biological role, component of the cytochrome b6-f complex, which mediates electron transfer between photosystem II (PSII) and photosystem I (PSI), cyclic electron flow around PSI, and state transitions. PetG is required for either the stability or assembly of the cytochrome b6-f complex. This is Cytochrome b6-f complex subunit 5 from Aneura mirabilis (Parasitic liverwort).